A 37-amino-acid polypeptide reads, in one-letter code: Mu-agatoxin-Aa1f (37 aa).

Intrachain disulfides connect Cys2–Cys18, Cys9–Cys23, Cys17–Cys33, and Cys25–Cys31. At Asn37 the chain carries Asparagine amide.

It belongs to the neurotoxin 07 (Beta/delta-agtx) family. 03 (aga-4) subfamily. Aga sub-subfamily. As to expression, expressed by the venom gland.

It is found in the secreted. In terms of biological role, insecticidal neurotoxin that induces an irreversible spastic paralysis when injected into insects. Modifies presynaptic voltage-gated sodium channels (Nav), causing them to open at the normal resting potential of the nerve. This leads to spontaneous release of neurotransmitter and repetitive action potentials in motor neurons. The polypeptide is Mu-agatoxin-Aa1f (Agelenopsis aperta (North American funnel-web spider)).